The primary structure comprises 1537 residues: Adhesion G protein-coupled receptor L3 (1537 aa).

The first 19 residues, 1–19, serve as a signal peptide directing secretion; sequence MWPPQLLILTMLLAPVVHG. Over 20–943 the chain is Extracellular; it reads GKHNERHPAL…VKHSDAVHDL (924 aa). Residues 53 to 80 are disordered; it reads PAAERSTAHRGQGPRGAARGVRGPGAPG. One can recognise an SUEL-type lectin domain in the interval 103-192; sequence SCESYPIELR…KYLEVQYECV (90 aa). Intrachain disulfides connect Cys-104–Cys-134, Cys-113–Cys-191, Cys-146–Cys-178, Cys-159–Cys-165, and Cys-203–Cys-385. Asn-161 is a glycosylation site (N-linked (GlcNAc...) asparagine). In terms of domain architecture, Olfactomedin-like spans 202 to 461; sequence LCPGLLKGVY…VVKYSLDFGP (260 aa). The interaction with FLRT3 stretch occupies residues 317–347; the sequence is YHDTSPYRWGGKSDIDLAVDENGLWVIYATE. 4 residues coordinate Ca(2+): Asp-332, Asn-380, Ala-381, and Val-435. Residues 521–540 form a disordered region; sequence RSTTASLPGRRNRSTSTPSP. Asn-532, Asn-617, Asn-827, Asn-840, Asn-885, and Asn-911 each carry an N-linked (GlcNAc...) asparagine glycan. Positions 756–935 constitute a GAIN-B domain; sequence DIVRENTDNI…AVLMAHVEVK (180 aa). Cystine bridges form between Cys-886-Cys-917 and Cys-905-Cys-919. Positions 886-935 are GPS; the sequence is CSFWSYSKRTMTGYWSTQGCRLLTTNKTHTTCSCNHLTNFAVLMAHVEVK. Residues 923 to 939 are stachel; it reads TNFAVLMAHVEVKHSDA. The helical transmembrane segment at 944-969 threads the bilayer; the sequence is LLDVITWVGILLSLVCLLICIFTFCF. The Cytoplasmic segment spans residues 970–975; sequence FRGLQS. The chain crosses the membrane as a helical span at residues 976–999; that stretch reads DRNTIHKNLCISLFVAELLFLIGI. The N-linked (GlcNAc...) asparagine glycan is linked to Asn-1000. The Extracellular segment spans residues 1000–1006; that stretch reads NRTDQPI. Residues 1007–1034 traverse the membrane as a helical segment; that stretch reads ACAVFAALLHFFFLAAFTWMFLEGVQLY. A disulfide bond links Cys-1008 and Cys-1080. The Cytoplasmic portion of the chain corresponds to 1035–1048; the sequence is IMLVEVFESEHSRR. The helical transmembrane segment at 1049–1071 threads the bilayer; the sequence is KYFYLVGYGMPALIVAVSAAVDY. Residues 1072–1086 are Extracellular-facing; that stretch reads RSYGTDKVCWLRLDT. A helical transmembrane segment spans residues 1087–1112; it reads YFIWSFIGPATLIIMLNVIFLGIALY. Residues 1113–1142 are Cytoplasmic-facing; that stretch reads KMFHHTAILKPESGCLDNINYEDNRPFIKS. The chain crosses the membrane as a helical span at residues 1143 to 1163; sequence WVIGAIALLCLLGLTWAFGLM. The Extracellular portion of the chain corresponds to 1164 to 1168; the sequence is YINES. Asn-1166 carries an N-linked (GlcNAc...) asparagine glycan. Residues 1169 to 1195 form a helical membrane-spanning segment; that stretch reads TVIMAYLFTIFNSLQGMFIFIFHCVLQ. Over 1196-1537 the chain is Cytoplasmic; sequence KKVRKEYGKC…KGPAHLVTSL (342 aa). The interval 1213 to 1237 is disordered; sequence GKSTESSIGSGKTSGSRTPGRYSTG. 2 positions are modified to phosphoserine: Ser-1254 and Ser-1522. The interval 1512 to 1537 is disordered; that stretch reads FIVPPNKDGASPEGTSKGPAHLVTSL. The PDZ-binding motif lies at 1532-1537; it reads HLVTSL.

It belongs to the G-protein coupled receptor 2 family. LN-TM7 subfamily. In terms of assembly, heterodimer of 2 chains generated by proteolytic processing; the large extracellular N-terminal fragment and the membrane-bound C-terminal fragment predominantly remain associated and non-covalently linked. Interacts (via olfactomedin-like domain) with FLRT1 (via extracellular domain). Interacts (via olfactomedin-like domain) with FLRT2 (via extracellular domain). Interacts (via olfactomedin-like domain) with FLRT3 (via extracellular domain); the interaction is direct. Interacts (via extracellular domain) with TENM1. Interacts (via extracellular domain) with TENM2. Interacts (via extracellular domain) with TENM3. Identified in a complex with FLRT3 and UNC5B; does not interact with UNC5B by itself. Identified in a complex with FLRT3 and UNC5D; does not interact with UNC5D by itself. As to quaternary structure, interacts (via PDZ-binding motif) with SHANK3. Interacts (via PDZ-binding motif) with DLG4. In terms of processing, autoproteolytically processed at the GPS region of the GAIN-B domain; this cleavage modulates receptor activity. Post-translationally, O-glycosylated (major) and N-glycosylated. As to expression, localizes to postsynaptic spines in non-overlapping dendritic domains of CA1-region pyramidal neurons: specifically localizes to excitatory synapses in the S.oriens and S.radiatum, corresponding to distinct presynaptic inputs onto CA1-region pyramidal neurons.

The protein localises to the cell membrane. The protein resides in the postsynaptic cell membrane. Its subcellular location is the cell projection. It is found in the axon. It localises to the cell junction. With respect to regulation, forms a heterodimer of 2 chains generated by proteolytic processing that remain associated through non-covalent interactions mediated by the GAIN-B domain. In the inactivated receptor, the Stachel sequence (also named stalk) is embedded in the GAIN-B domain, where it adopts a beta-strand conformation. On activation, the Stachel moves into the 7 transmembrane region and adopts a twisted hook-shaped configuration that forms contacts within the receptor, leading to coupling of a G-alpha protein, which activates signaling. The cleaved GAIN-B and N-terminal domains can then dissociate from the rest of the receptor. Orphan adhesion G-protein coupled receptor (aGPCR), which mediates synapse specificity. Ligand binding causes a conformation change that triggers signaling via guanine nucleotide-binding proteins (G proteins) and modulates the activity of downstream effectors. ADGRL3 is coupled with different classes of G alpha proteins, such as G(12)/G(13), G(s), G(i) or G(q), depending on the context. Coupling to G(12)/G(13) G proteins, which mediates the activation Rho small GTPases is the most efficient. Following G-protein coupled receptor activation, associates with cell adhesion molecules that are expressed at the surface of adjacent cells to direct synapse specificity. Specifically mediates the establishment of Schaffer-collateral synapses formed by CA3-region axons on CA1-region pyramidal neurons in the hippocampus. Localizes to postsynaptic spines in excitatory synapses in the S.oriens and S.radiatum and interacts with presynaptic cell adhesion molecules FLRT3 and TENM2, promoting synapse formation. Plays a role in the development of glutamatergic synapses in the cortex. Important in determining the connectivity rates between the principal neurons in the cortex. Functionally, orphan adhesion G-protein coupled receptor (aGPCR), which mediates synapse specificity. Ligand binding causes a conformation change that triggers signaling via guanine nucleotide-binding proteins (G proteins) and modulates the activity of downstream effectors, such as adenylate cyclase. Isoform 1 is specifically coupled to G(s) G proteins and mediates activation of adenylate cyclase activity. Following G-protein coupled receptor activation, undergoes liquid-liquid phase transition, associates with (1) cell adhesion molecules that are expressed at the surface of adjacent cells, as well as (2) PDZ-containing proteins, such as SHANK3 and DLG4, in the cytoplasm to direct synapse formation. Its function is as follows. Orphan adhesion G-protein coupled receptor (aGPCR). Ligand binding causes a conformation change that triggers signaling via guanine nucleotide-binding proteins (G proteins) and modulates the activity of downstream effectors, such as RhoA pathway. Isoform 7 is coupled to G(12) and/or G(13) G proteins (GNA12 and GNA13, respectively) and mediates the activation Rho small GTPases. The sequence is that of Adhesion G protein-coupled receptor L3 from Mus musculus (Mouse).